A 578-amino-acid chain; its full sequence is MDIQRSILIVALAVVSYLLVLQWNKDYGQPELPAASASMNTTQGLPDTPSASGTSSDVPTAQSSAAGSEAADKPVAVSDKLIQVKTDVLDLAIDPRGGDIVQLGLLQYPRRLDRPDVPFPLFDNGRERTYLAQSGLTGADGPDASSAGRPLFHSAQSSYQLADGQNELVVDLSFSHDGVNYIKRFTFHRGLKADCSDKEKAQKKIECINENAYQVGVSYLIDNQSGKTWSGNLFAQLKRDGSADPSSTTATGVSTYLGAAVWTPDSPYKKISTKDMDKEQFKESVQGGWVAWLQHYFVTAWVPTKGEQHQVMTRKDGQGNYIVGFTGPTLSVPAGSKVETDLTLYAGPKLQKHLKELSPGLELTVDYGFLWFIAQPIFWLLQHIHSLIGNWGWSIIALTVLIKLAFFPLSAASYRSMARMRAVSPKMQAIKEQHGDDRQKMSQAMMELYKKEKINPLGGCLPILVQMPVFLSLYWVLLESVEMRQAPWLGWITDLSVKDPFFILPIVMGGTMLIQQMLNPTPPDPMQAKVMKLMPIIFTFFFLWFPAGLVLYWVVNNCLSIAQQWYITRKIEAAAKTA.

A helical transmembrane segment spans residues 3–23 (IQRSILIVALAVVSYLLVLQW). The disordered stretch occupies residues 34–72 (AASASMNTTQGLPDTPSASGTSSDVPTAQSSAAGSEAAD). Residues 37–66 (ASMNTTQGLPDTPSASGTSSDVPTAQSSAA) show a composition bias toward polar residues. Helical transmembrane passes span 361 to 381 (LELT…FWLL), 387 to 407 (LIGN…LAFF), 457 to 477 (LGGC…YWVL), 500 to 520 (PFFI…MLNP), and 535 to 555 (PIIF…YWVV).

It belongs to the OXA1/ALB3/YidC family. Type 1 subfamily. Interacts with the Sec translocase complex via SecD. Specifically interacts with transmembrane segments of nascent integral membrane proteins during membrane integration.

It is found in the cell inner membrane. Required for the insertion and/or proper folding and/or complex formation of integral membrane proteins into the membrane. Involved in integration of membrane proteins that insert both dependently and independently of the Sec translocase complex, as well as at least some lipoproteins. Aids folding of multispanning membrane proteins. The polypeptide is Membrane protein insertase YidC (Pseudomonas aeruginosa (strain LESB58)).